Reading from the N-terminus, the 83-residue chain is Toxin CjTL8 (83 aa).

An N-terminal signal peptide occupies residues 1 to 20 (MSSAIKILALLMVLVALAQA). A propeptide spanning residues 21 to 44 (KPRKDYRAYPDFDDKSVILEDDKR) is cleaved from the precursor. Residue Phe-81 is modified to Phenylalanine amide.

Post-translationally, contains 3 disulfide bonds.

The protein localises to the secreted. It localises to the nematocyst. In vivo, induces immediate paralysis on shrimps (C.multidentata), followed by death when high doses are injected. No activity is observed when injected into fly larvae (M.domestica). This chain is Toxin CjTL8, found in Epiactis japonica (Sea anemone).